The following is a 94-amino-acid chain: Ubiquitin-like protein ATG12B (94 aa).

Ala2 carries the post-translational modification N-acetylalanine. Residue Gly94 forms a Glycyl lysine isopeptide (Gly-Lys) (interchain with K-128 in ATG5) linkage.

It belongs to the ATG12 family. In terms of tissue distribution, ubiquitous.

Its subcellular location is the cytoplasm. Functionally, ubiquitin-like protein involved in cytoplasm to vacuole transport (Cvt) and autophagy vesicles formation. Conjugation with ATG5 through a ubiquitin-like conjugating system involving also ATG7 as an E1-like activating enzyme and ATG10 as an E2-like conjugating enzyme, is essential for its function. ATG12/ATG5 conjugate has an essential role in plant nutrient recycling. The protein is Ubiquitin-like protein ATG12B (ATG12B) of Arabidopsis thaliana (Mouse-ear cress).